The chain runs to 90 residues: MKKKGGRKILGFMVKEEKEENRGSVEFQVFSFTNKIRRLASHLELHKKDFSSERGLRRLLGKRRRLLAYLAKKNRVRYKKLIGQLNIREQ.

Belongs to the universal ribosomal protein uS15 family. Part of the 30S ribosomal subunit.

It localises to the plastid. Its subcellular location is the chloroplast. In Hordeum vulgare (Barley), this protein is Small ribosomal subunit protein uS15c (rps15-A).